Here is a 920-residue protein sequence, read N- to C-terminus: Phosphoenolpyruvate carboxylase (920 aa).

Residues His138 and Lys583 contribute to the active site.

The protein belongs to the PEPCase type 1 family. Mg(2+) serves as cofactor.

The catalysed reaction is oxaloacetate + phosphate = phosphoenolpyruvate + hydrogencarbonate. Functionally, forms oxaloacetate, a four-carbon dicarboxylic acid source for the tricarboxylic acid cycle. This chain is Phosphoenolpyruvate carboxylase, found in Streptococcus pyogenes serotype M3 (strain ATCC BAA-595 / MGAS315).